Here is a 309-residue protein sequence, read N- to C-terminus: MLSTMEGVLLSVSTSEAVLGIVGNTFIALVNCMDYNRNKKLSNIGFILTGLAISRICLVLILITEAYIKIFYPQLLSPVNIIELISYLWIIICQLNVWFATSLSIFYFLKIANFSHYIFVWLKRRIDLVFFFLIGCLLISWLFSFPVVAKMVKDNKMLYINTSWQIHMKKSELIINYVFTNGGVFLFFMIMLIVCFLLIISLWRHRRQMESNKLGFRDLNTEVHVRTIKVLLSFIILFILHFMGITINVICLLIPESNLLFMFGLTTAFIYPGCHSLILILANSRLKQCSVMILQLLKCCENGKELRDT.

Topologically, residues 1 to 7 are extracellular; sequence MLSTMEG. The chain crosses the membrane as a helical span at residues 8-28; sequence VLLSVSTSEAVLGIVGNTFIA. Residues 29-43 lie on the Cytoplasmic side of the membrane; the sequence is LVNCMDYNRNKKLSN. The helical transmembrane segment at 44–64 threads the bilayer; the sequence is IGFILTGLAISRICLVLILIT. Topologically, residues 65–87 are extracellular; the sequence is EAYIKIFYPQLLSPVNIIELISY. The helical transmembrane segment at 88 to 108 threads the bilayer; that stretch reads LWIIICQLNVWFATSLSIFYF. Residues 109–127 are Cytoplasmic-facing; that stretch reads LKIANFSHYIFVWLKRRID. A helical transmembrane segment spans residues 128-148; sequence LVFFFLIGCLLISWLFSFPVV. Residues 149–182 are Extracellular-facing; that stretch reads AKMVKDNKMLYINTSWQIHMKKSELIINYVFTNG. The N-linked (GlcNAc...) asparagine glycan is linked to asparagine 161. The helical transmembrane segment at 183-203 threads the bilayer; it reads GVFLFFMIMLIVCFLLIISLW. Topologically, residues 204 to 233 are cytoplasmic; it reads RHRRQMESNKLGFRDLNTEVHVRTIKVLLS. A helical transmembrane segment spans residues 234-254; that stretch reads FIILFILHFMGITINVICLLI. The Extracellular portion of the chain corresponds to 255–259; sequence PESNL. A helical transmembrane segment spans residues 260 to 280; that stretch reads LFMFGLTTAFIYPGCHSLILI. Residues 281–309 lie on the Cytoplasmic side of the membrane; that stretch reads LANSRLKQCSVMILQLLKCCENGKELRDT.

This sequence belongs to the G-protein coupled receptor T2R family.

It localises to the membrane. Functionally, putative taste receptor which may play a role in the perception of bitterness. The sequence is that of Taste receptor type 2 member 114 from Mus musculus (Mouse).